Here is a 218-residue protein sequence, read N- to C-terminus: Copper acquisition factor BIM1 (218 aa).

The signal sequence occupies residues Met-1–Ala-19. Residues His-20 and His-65 each coordinate Cu(2+). 2 cysteine pairs are disulfide-bonded: Cys-40–Cys-144 and Cys-110–Cys-161. N-linked (GlcNAc...) asparagine glycans are attached at residues Asn-87, Asn-91, and Asn-124. Asp-138 is a Cu(2+) binding site. Asn-158 and Asn-170 each carry an N-linked (GlcNAc...) asparagine glycan. Residues Thr-160–Ser-194 form a disordered region. Positions Arg-167–Ser-194 are enriched in low complexity. A lipid anchor (GPI-anchor amidated serine) is attached at Ser-190. Residues Ser-191–Leu-218 constitute a propeptide, removed in mature form.

This sequence belongs to the X325 family. Cu(2+) is required as a cofactor.

It localises to the cell membrane. In terms of biological role, lytic polysaccharide monooxygenase-like protein that has diverged to biological functions other than polysaccharide degradation since it does not perform oxidative cleavage of polysaccharides. Cell surface-bound protein that functions in the copper-accumulation pathway shared by the CUF1-dependent copper transporter CTR1. Involved in maintaining cell wall integrity during copper deficiency. Binds Cu(2+) with an estimated 1:1 stoichiometry and might serve as an extracellular copper ligand. FRE4 and FRE7 metalloreductases probably function together with CTR1 and BIM1 to liberate the Cu(2+) bound to the BIM1 copper-binding site for subsequent import of Cu(+) into the cell by CTR1, via the reduction of BIM1-bound Cu(2+) to Cu(+) to reduce binding affinity for BIM1 but increase affinity for CTR1. Facilitates copper acquisition in the brain of mammalian hosts and acts as a copper-dependent virulence trait in fungal meningitis. While BIM1 plays a critical role in cryptococcal meningitis, at least in part through its role in copper acquisition, it could play additional roles during copper limitation or as a means to invade and colonize host tissues in the brain, by compromising host carbohydrate integrity via its lytic polysaccharide monooxygenase (LPMO) activity, which has still to be determined. This chain is Copper acquisition factor BIM1, found in Cryptococcus neoformans var. neoformans serotype D (strain JEC21 / ATCC MYA-565) (Filobasidiella neoformans).